We begin with the raw amino-acid sequence, 463 residues long: MISAISSPWLTQLSHFCDVAAFTANSLSSLNASGGYHLSPSPGDPYSQHEPHYEPCSASQHSYSFGHACPEPESGASSSSCASSTPGSGSTGSSSGNKAPVKKNPKVANITVQLEMKALWDEFNQLGTEMIVTKAGRRMFPTFQVKIFGMDPMADYMLLMDFVPVDDKRYRYAFHSSSWLVAGKADPATPGRVHYHPDSPAKGAQWMKQIVSFDKLKLTNNLLDDNGHIILNSMHRYQPRFHVVYVDPRKDSEKYAEENFKTFVFEETRFTAVTAYQNHRITQLKIASNPFAKGFRDCDPEDWPRNHRPGSLPLMNAFARSRNPVSSPPQNGSDKDGDGRREYERDASVTPLHGDAAHQQLMSRVLSPSLPVPGGLVPLSTGRPSPPHELRLDPHSQGSEPLHHHPYKYPTSYDHYLGAKTRPAPYPLPSIRGHGYHHHPMNPAAANMYSGAGAPGGYEYGPR.

2 disordered regions span residues 39–58 (SPSPGDPYSQHEPHYEPCSA) and 75–102 (GASSSSCASSTPGSGSTGSSSGNKAPVK). Low complexity predominate over residues 75-96 (GASSSSCASSTPGSGSTGSSSG). Residues 119-297 (LWDEFNQLGT…SNPFAKGFRD (179 aa)) constitute a DNA-binding region (T-box). Disordered stretches follow at residues 320 to 343 (RSRNPVSSPPQNGSDKDGDGRREY) and 367 to 406 (SPSLPVPGGLVPLSTGRPSPPHELRLDPHSQGSEPLHHHP). The span at 323-332 (NPVSSPPQNG) shows a compositional bias: polar residues. A compositionally biased stretch (basic and acidic residues) spans 333 to 343 (SDKDGDGRREY). Residues 367-380 (SPSLPVPGGLVPLS) are compositionally biased toward low complexity. The Nuclear localization signal signature appears at 420–431 (KTRPAPYPLPSI).

As to quaternary structure, binds DNA as a dimer. Interacts with dscr6/ripply3.

Its subcellular location is the nucleus. Its function is as follows. Probable transcriptional regulator involved in developmental processes. Binds to the palindromic T site 5'-TTCACACCTAGGTGTGAA-3' DNA sequence. Induces pre-placodal ectoderm (PPE) gene expression in regions where RIPPLY3 is absent. Plays a role in the formation of the anteroposterior (AP) axis during embryonic development; required to establish the posterolateral border of the pre-placodal ectoderm (PPE) acting downstream of the retinoic acid receptor (RAR) signaling. In terms of biological role, probable transcriptional regulator involved in developmental processes. Binds to the palindromic T site 5'-TTCACACCTAGGTGTGAA-3' DNA sequence. Is required for normal development of the pharyngeal arch arteries. This Xenopus laevis (African clawed frog) protein is T-box transcription factor TBX1-B (tbx1-b).